Reading from the N-terminus, the 349-residue chain is Large ribosomal subunit protein uL2mz, N-terminal part (349 aa).

Belongs to the universal ribosomal protein uL2 family. Component of the mitochondrial ribosome large subunit.

The protein resides in the mitochondrion. This chain is Large ribosomal subunit protein uL2mz, N-terminal part, found in Arabidopsis thaliana (Mouse-ear cress).